Reading from the N-terminus, the 274-residue chain is Single-stranded DNA-binding protein WHY1, chloroplastic (274 aa).

The N-terminal 54 residues, 1–54 (MSNFSLSPSPTSGFSLNLQNPTKTSYLSFSSSINTIFAPLSSNTTKSFSGLTHK), are a transit peptide targeting the chloroplast. The interval 100 to 105 (KGKAAL) is required for ssDNA binding. The Nuclear localization signal signature appears at 178–191 (KGRSDEGRVRKVLK). The tract at residues 253–274 (PEDASRSNNANPRSGAELEWNR) is disordered.

This sequence belongs to the Whirly family. Homotetramer.

It localises to the nucleus. The protein resides in the plastid. Its subcellular location is the chloroplast. Single-stranded DNA-binding protein that acts as a transcriptional activator of the pathogenesis-related gene PR-10a. Upon elicitation, binds a 30bp promoter sequence known as elicitor element response (ERE) and is required for PR-10a expression. This Solanum tuberosum (Potato) protein is Single-stranded DNA-binding protein WHY1, chloroplastic (WHY1).